Reading from the N-terminus, the 141-residue chain is Large ribosomal subunit protein uL11 (141 aa).

The protein belongs to the universal ribosomal protein uL11 family. In terms of assembly, part of the ribosomal stalk of the 50S ribosomal subunit. Interacts with L10 and the large rRNA to form the base of the stalk. L10 forms an elongated spine to which L12 dimers bind in a sequential fashion forming a multimeric L10(L12)X complex. One or more lysine residues are methylated.

Functionally, forms part of the ribosomal stalk which helps the ribosome interact with GTP-bound translation factors. The chain is Large ribosomal subunit protein uL11 from Alkaliphilus oremlandii (strain OhILAs) (Clostridium oremlandii (strain OhILAs)).